The chain runs to 345 residues: N-acetyl-gamma-glutamyl-phosphate reductase (345 aa).

The active site involves cysteine 151.

This sequence belongs to the NAGSA dehydrogenase family. Type 1 subfamily.

It is found in the cytoplasm. The catalysed reaction is N-acetyl-L-glutamate 5-semialdehyde + phosphate + NADP(+) = N-acetyl-L-glutamyl 5-phosphate + NADPH + H(+). It participates in amino-acid biosynthesis; L-arginine biosynthesis; N(2)-acetyl-L-ornithine from L-glutamate: step 3/4. In terms of biological role, catalyzes the NADPH-dependent reduction of N-acetyl-5-glutamyl phosphate to yield N-acetyl-L-glutamate 5-semialdehyde. In Clostridium novyi (strain NT), this protein is N-acetyl-gamma-glutamyl-phosphate reductase.